The primary structure comprises 31 residues: Photosystem II reaction center protein T (31 aa).

The chain crosses the membrane as a helical span at residues 3-23 (SFAYVLILTFAIATLFFAIAF).

Belongs to the PsbT family. As to quaternary structure, PSII is composed of 1 copy each of membrane proteins PsbA, PsbB, PsbC, PsbD, PsbE, PsbF, PsbH, PsbI, PsbJ, PsbK, PsbL, PsbM, PsbT, PsbX, PsbY, PsbZ, Psb30/Ycf12, peripheral proteins PsbO, CyanoQ (PsbQ), PsbU, PsbV and a large number of cofactors. It forms dimeric complexes.

It localises to the cellular thylakoid membrane. Its function is as follows. Found at the monomer-monomer interface of the photosystem II (PS II) dimer, plays a role in assembly and dimerization of PSII. PSII is a light-driven water plastoquinone oxidoreductase, using light energy to abstract electrons from H(2)O, generating a proton gradient subsequently used for ATP formation. The protein is Photosystem II reaction center protein T of Synechococcus sp. (strain CC9902).